We begin with the raw amino-acid sequence, 322 residues long: MFEIHPVKKVSVVIPVYNEQESLPELIRRTTTACESLGKEYEILLIDDGSSDNSAHILVEASQAENSHIVSILLNRNYGQHSAIMAGFSHVTGDLIITLDADLQNPPEEIPRLVAKADEGYDVVGTVRQNRQDSWFRKTASKMINRLIQRTTGKAMGDYGCMLRAYRRHIVDAMLHCHERSTFIPILANIFARRAIEIPVHHAEREYGESKYSFMRLINLMYDLVTCLTTTPLRMLSLLGSIIAIGGFSIAVLLVILRLTFGPQWAAEGVFMLFAVLFTFIGAQFIGMGLLGEYIGRIYTDVRARPRYFVQQVIRPSSKENE.

Residues 1–235 (MFEIHPVKKV…TCLTTTPLRM (235 aa)) are Cytoplasmic-facing. The chain crosses the membrane as a helical span at residues 236–256 (LSLLGSIIAIGGFSIAVLLVI). The Periplasmic segment spans residues 257–269 (LRLTFGPQWAAEG). Residues 270–290 (VFMLFAVLFTFIGAQFIGMGL) traverse the membrane as a helical segment. Over 291-322 (LGEYIGRIYTDVRARPRYFVQQVIRPSSKENE) the chain is Cytoplasmic.

Belongs to the glycosyltransferase 2 family.

Its subcellular location is the cell inner membrane. The enzyme catalyses UDP-4-deoxy-4-formamido-beta-L-arabinose + di-trans,octa-cis-undecaprenyl phosphate = 4-deoxy-4-formamido-alpha-L-arabinopyranosyl di-trans,octa-cis-undecaprenyl phosphate + UDP. Its pathway is glycolipid biosynthesis; 4-amino-4-deoxy-alpha-L-arabinose undecaprenyl phosphate biosynthesis; 4-amino-4-deoxy-alpha-L-arabinose undecaprenyl phosphate from UDP-4-deoxy-4-formamido-beta-L-arabinose and undecaprenyl phosphate: step 1/2. The protein operates within bacterial outer membrane biogenesis; lipopolysaccharide biosynthesis. In terms of biological role, catalyzes the transfer of 4-deoxy-4-formamido-L-arabinose from UDP to undecaprenyl phosphate. The modified arabinose is attached to lipid A and is required for resistance to polymyxin and cationic antimicrobial peptides. The polypeptide is Undecaprenyl-phosphate 4-deoxy-4-formamido-L-arabinose transferase (Escherichia coli O157:H7 (strain EC4115 / EHEC)).